The primary structure comprises 363 residues: Ribonuclease P protein subunit p40 (363 aa).

As to quaternary structure, component of nuclear RNase P and RNase MRP ribonucleoproteins. RNase P consists of a catalytic RNA moiety and about 10 protein subunits; POP1, POP4, POP5, POP7, RPP14, RPP21, RPP25, RPP30, RPP38 and RPP40. Within the RNase P complex, POP1, POP7 and RPP25 form the 'finger' subcomplex, POP5, RPP14, RPP40 and homodimeric RPP30 form the 'palm' subcomplex, and RPP21, POP4 and RPP38 form the 'wrist' subcomplex. All subunits of the RNase P complex interact with the catalytic RNA. Several subunits of RNase P are also part of the RNase MRP complex. RNase MRP consists of a catalytic RNA moiety and about 8 protein subunits; POP1, POP7, RPP25, RPP30, RPP38, RPP40 and possibly also POP4 and POP5.

The protein localises to the nucleus. It localises to the nucleolus. Functionally, component of ribonuclease P, a ribonucleoprotein complex that generates mature tRNA molecules by cleaving their 5'-ends. Also a component of the MRP ribonuclease complex, which cleaves pre-rRNA sequences. The polypeptide is Ribonuclease P protein subunit p40 (Rpp40) (Rattus norvegicus (Rat)).